The chain runs to 350 residues: Probable dual-specificity RNA methyltransferase RlmN (350 aa).

The region spanning 105–342 is the Radical SAM core domain; that stretch reads ANGKNSVCIS…VRQSKGANIN (238 aa). Cys112 and Cys345 are disulfide-bonded. Residues Cys119, Cys123, and Cys126 each contribute to the [4Fe-4S] cluster site. S-adenosyl-L-methionine-binding positions include 166 to 167, Ser198, 221 to 223, and Asn302; these read GE and SLH. The active-site S-methylcysteine intermediate is the Cys345.

The protein belongs to the radical SAM superfamily. RlmN family. The cofactor is [4Fe-4S] cluster.

Its subcellular location is the cytoplasm. The catalysed reaction is adenosine(2503) in 23S rRNA + 2 reduced [2Fe-2S]-[ferredoxin] + 2 S-adenosyl-L-methionine = 2-methyladenosine(2503) in 23S rRNA + 5'-deoxyadenosine + L-methionine + 2 oxidized [2Fe-2S]-[ferredoxin] + S-adenosyl-L-homocysteine. It catalyses the reaction adenosine(37) in tRNA + 2 reduced [2Fe-2S]-[ferredoxin] + 2 S-adenosyl-L-methionine = 2-methyladenosine(37) in tRNA + 5'-deoxyadenosine + L-methionine + 2 oxidized [2Fe-2S]-[ferredoxin] + S-adenosyl-L-homocysteine. In terms of biological role, specifically methylates position 2 of adenine 2503 in 23S rRNA and position 2 of adenine 37 in tRNAs. This is Probable dual-specificity RNA methyltransferase RlmN from Endomicrobium trichonymphae.